Consider the following 411-residue polypeptide: AT-hook motif nuclear-localized protein 14 (411 aa).

Disordered regions lie at residues 1–32 (MDPN…QRLT), 54–164 (ASTG…LGSV), 289–348 (KDAA…HQAG), and 366–411 (THSR…QIPD). The span at 7–19 (HHHHQQQQLHHLH) shows a compositional bias: basic residues. Over residues 20–29 (QQQQQQQQQQ) the composition is skewed to low complexity. The span at 54–66 (ASTGNAVPSSNNG) shows a compositional bias: polar residues. The Bipartite nuclear localization signal motif lies at 105 to 113 (KRKRGRPRK). Residues 105 to 117 (KRKRGRPRKYVTP) constitute a DNA-binding region (a.T hook). Low complexity-rich tracts occupy residues 120–135 (ALAA…SSSA) and 144–159 (VTGG…SKKS). The PPC domain occupies 165–305 (GKTGQCFTPH…GKGDASNSGS (141 aa)). Positions 306–315 (RLTSPVSSGQ) are enriched in polar residues. Residues 374 to 390 (RGGGNSGHDGRGGGGYD) are compositionally biased toward gly residues.

It localises to the nucleus. In terms of biological role, transcription factor that specifically binds AT-rich DNA sequences related to the nuclear matrix attachment regions (MARs). This is AT-hook motif nuclear-localized protein 14 from Arabidopsis thaliana (Mouse-ear cress).